The chain runs to 223 residues: Leucyl/phenylalanyl-tRNA--protein transferase (223 aa).

This sequence belongs to the L/F-transferase family.

The protein localises to the cytoplasm. It catalyses the reaction N-terminal L-lysyl-[protein] + L-leucyl-tRNA(Leu) = N-terminal L-leucyl-L-lysyl-[protein] + tRNA(Leu) + H(+). It carries out the reaction N-terminal L-arginyl-[protein] + L-leucyl-tRNA(Leu) = N-terminal L-leucyl-L-arginyl-[protein] + tRNA(Leu) + H(+). The catalysed reaction is L-phenylalanyl-tRNA(Phe) + an N-terminal L-alpha-aminoacyl-[protein] = an N-terminal L-phenylalanyl-L-alpha-aminoacyl-[protein] + tRNA(Phe). Functionally, functions in the N-end rule pathway of protein degradation where it conjugates Leu, Phe and, less efficiently, Met from aminoacyl-tRNAs to the N-termini of proteins containing an N-terminal arginine or lysine. This Dinoroseobacter shibae (strain DSM 16493 / NCIMB 14021 / DFL 12) protein is Leucyl/phenylalanyl-tRNA--protein transferase.